The following is a 162-amino-acid chain: Ribonuclease H (162 aa).

Positions aspartate 6–glutamate 154 constitute an RNase H type-1 domain. Positions 15, 53, 82, and 146 each coordinate Mg(2+).

The protein belongs to the RNase H family. In terms of assembly, monomer. Requires Mg(2+) as cofactor.

Its subcellular location is the cytoplasm. It carries out the reaction Endonucleolytic cleavage to 5'-phosphomonoester.. Endonuclease that specifically degrades the RNA of RNA-DNA hybrids. The polypeptide is Ribonuclease H (Nitrosomonas eutropha (strain DSM 101675 / C91 / Nm57)).